The chain runs to 132 residues: ATP synthase epsilon chain (132 aa).

It belongs to the ATPase epsilon chain family. F-type ATPases have 2 components, CF(1) - the catalytic core - and CF(0) - the membrane proton channel. CF(1) has five subunits: alpha(3), beta(3), gamma(1), delta(1), epsilon(1). CF(0) has three main subunits: a, b and c.

The protein resides in the cell inner membrane. Produces ATP from ADP in the presence of a proton gradient across the membrane. This Aquifex aeolicus (strain VF5) protein is ATP synthase epsilon chain (atpC).